A 118-amino-acid chain; its full sequence is Myotrophin (118 aa).

ANK repeat units lie at residues 1–30 (MGDK…DVNR), 34–65 (GGRK…NAAD), and 67–98 (HGIT…TVKG).

Belongs to the myotrophin family.

The protein localises to the cytoplasm. The protein resides in the nucleus. It is found in the perinuclear region. Its function is as follows. Regulates NF-kappa-B transcription factor activity. Promotes growth of cardiomyocytes, but not cardiomyocyte proliferation. Promotes cardiac muscle hypertrophy. Plays a role in the regulation of the growth of actin filaments. Inhibits the activity of the F-actin-capping protein complex. This chain is Myotrophin (mtpn), found in Xenopus tropicalis (Western clawed frog).